Here is a 129-residue protein sequence, read N- to C-terminus: Phosphoribosyl-AMP cyclohydrolase (129 aa).

D76 is a Mg(2+) binding site. A Zn(2+)-binding site is contributed by C77. The Mg(2+) site is built by D78 and D80. Residues C97 and C104 each coordinate Zn(2+).

This sequence belongs to the PRA-CH family. As to quaternary structure, homodimer. Requires Mg(2+) as cofactor. Zn(2+) serves as cofactor.

It localises to the cytoplasm. It carries out the reaction 1-(5-phospho-beta-D-ribosyl)-5'-AMP + H2O = 1-(5-phospho-beta-D-ribosyl)-5-[(5-phospho-beta-D-ribosylamino)methylideneamino]imidazole-4-carboxamide. The protein operates within amino-acid biosynthesis; L-histidine biosynthesis; L-histidine from 5-phospho-alpha-D-ribose 1-diphosphate: step 3/9. In terms of biological role, catalyzes the hydrolysis of the adenine ring of phosphoribosyl-AMP. This chain is Phosphoribosyl-AMP cyclohydrolase, found in Methylibium petroleiphilum (strain ATCC BAA-1232 / LMG 22953 / PM1).